Here is a 220-residue protein sequence, read N- to C-terminus: Nitrile hydratase subunit beta (220 aa).

The protein belongs to the nitrile hydratase subunit beta family. In terms of assembly, heterodimer of an alpha and a beta chain.

It catalyses the reaction an aliphatic primary amide = an aliphatic nitrile + H2O. In terms of biological role, NHase catalyzes the hydration of various nitrile compounds to the corresponding amides. The sequence is that of Nitrile hydratase subunit beta (nthB) from Pseudomonas chlororaphis (Pseudomonas aureofaciens).